A 602-amino-acid chain; its full sequence is UvrABC system protein C (602 aa).

In terms of domain architecture, GIY-YIG spans 17–94; that stretch reads KTSGCYKMYS…IKKYKPTYNI (78 aa). The UVR domain maps to 199–234; that stretch reads SKLLNDIEIKMKEVIMKENFEAAIKLKETKKSLIEI.

The protein belongs to the UvrC family. Interacts with UvrB in an incision complex.

Its subcellular location is the cytoplasm. The UvrABC repair system catalyzes the recognition and processing of DNA lesions. UvrC both incises the 5' and 3' sides of the lesion. The N-terminal half is responsible for the 3' incision and the C-terminal half is responsible for the 5' incision. This is UvrABC system protein C from Borrelia recurrentis (strain A1).